The chain runs to 166 residues: uncharacterized protein (166 aa).

The segment at 1 to 58 is may interact with smn1; sequence MSSEITEGDLQKFHDEHFNAKAVNLWNVAFAQNDRGGNSESANVEYTQSVERYPDGTI.

Part of the core SMN complex at least composed of smn1, yip11/gem2, gem6, gem7 and gem8. Interacts with smn1; the interaction is direct. Interacts with gem7; the interaction is direct.

Its subcellular location is the cytoplasm. It localises to the nucleus. Its function is as follows. The SMN complex catalyzes the assembly of small nuclear ribonucleoproteins (snRNPs), the building blocks of the spliceosome, and thereby plays an important role in the splicing of cellular pre-mRNAs. Most spliceosomal snRNPs contain a common set of Sm proteins SNRPB, SNRPD1, SNRPD2, SNRPD3, SNRPE, SNRPF and SNRPG that assemble in a heptameric protein ring on the Sm site of the small nuclear RNA to form the core snRNP (Sm core). In the cytosol, the Sm proteins SNRPD1, SNRPD2, SNRPE, SNRPF and SNRPG are trapped in an inactive 6S pICln-Sm complex by the chaperone CLNS1A that controls the assembly of the core snRNP. To assemble core snRNPs, the SMN complex accepts the trapped 5Sm proteins from CLNS1A forming an intermediate. Binding of snRNA inside 5Sm triggers eviction of the SMN complex, thereby allowing binding of SNRPD3 and SNRPB to complete assembly of the core snRNP. This is an uncharacterized protein from Schizosaccharomyces pombe (strain 972 / ATCC 24843) (Fission yeast).